A 61-amino-acid chain; its full sequence is Photosystem II reaction center protein K (61 aa).

The propeptide occupies 1-24 (MLNIFSLIWICLNSALYSSGFFFG). Residues 36-56 (IIDFMPVIPVFFFLLAFVWQA) traverse the membrane as a helical segment.

It belongs to the PsbK family. As to quaternary structure, PSII is composed of 1 copy each of membrane proteins PsbA, PsbB, PsbC, PsbD, PsbE, PsbF, PsbH, PsbI, PsbJ, PsbK, PsbL, PsbM, PsbT, PsbX, PsbY, PsbZ, Psb30/Ycf12, at least 3 peripheral proteins of the oxygen-evolving complex and a large number of cofactors. It forms dimeric complexes.

The protein resides in the plastid. The protein localises to the chloroplast thylakoid membrane. Its function is as follows. One of the components of the core complex of photosystem II (PSII). PSII is a light-driven water:plastoquinone oxidoreductase that uses light energy to abstract electrons from H(2)O, generating O(2) and a proton gradient subsequently used for ATP formation. It consists of a core antenna complex that captures photons, and an electron transfer chain that converts photonic excitation into a charge separation. This Coffea arabica (Arabian coffee) protein is Photosystem II reaction center protein K.